The primary structure comprises 487 residues: Cobyric acid synthase (487 aa).

The 187-residue stretch at 249 to 435 (GIDIAIVRLP…IHGIFDEGDF (187 aa)) folds into the GATase cobBQ-type domain. C330 functions as the Nucleophile in the catalytic mechanism. The active site involves H427.

This sequence belongs to the CobB/CobQ family. CobQ subfamily.

It participates in cofactor biosynthesis; adenosylcobalamin biosynthesis. In terms of biological role, catalyzes amidations at positions B, D, E, and G on adenosylcobyrinic A,C-diamide. NH(2) groups are provided by glutamine, and one molecule of ATP is hydrogenolyzed for each amidation. The protein is Cobyric acid synthase of Clostridium perfringens (strain SM101 / Type A).